A 351-amino-acid polypeptide reads, in one-letter code: Photosystem II D2 protein (351 aa).

Residues 39–59 traverse the membrane as a helical segment; that stretch reads CAYLALGAWFTGTTFVSSWYT. Chlorophyll a is bound at residue His116. The helical transmembrane segment at 123–139 threads the bilayer; sequence GFCLRQFEIARLVGLRP. Residues Gln128 and Asn141 each contribute to the pheophytin a site. The helical transmembrane segment at 151–164 threads the bilayer; the sequence is VFVSVFLLYPLGQA. Residue His196 participates in chlorophyll a binding. Residues 206–226 traverse the membrane as a helical segment; it reads GALLCAIHGATVENTLFEDGE. 2 residues coordinate a plastoquinone: His213 and Phe260. His213 serves as a coordination point for Fe cation. His267 contributes to the Fe cation binding site. A helical membrane pass occupies residues 277-293; sequence GLWVSSIGIVGLALNLR.

It belongs to the reaction center PufL/M/PsbA/D family. PSII is composed of 1 copy each of membrane proteins PsbA, PsbB, PsbC, PsbD, PsbE, PsbF, PsbH, PsbI, PsbJ, PsbK, PsbL, PsbM, PsbT, PsbY, PsbZ, Psb30/Ycf12, at least 3 peripheral proteins of the oxygen-evolving complex and a large number of cofactors. It forms dimeric complexes. It depends on The D1/D2 heterodimer binds P680, chlorophylls that are the primary electron donor of PSII, and subsequent electron acceptors. It shares a non-heme iron and each subunit binds pheophytin, quinone, additional chlorophylls, carotenoids and lipids. There is also a Cl(-1) ion associated with D1 and D2, which is required for oxygen evolution. The PSII complex binds additional chlorophylls, carotenoids and specific lipids. as a cofactor.

It is found in the plastid. The protein localises to the chloroplast thylakoid membrane. It catalyses the reaction 2 a plastoquinone + 4 hnu + 2 H2O = 2 a plastoquinol + O2. In terms of biological role, photosystem II (PSII) is a light-driven water:plastoquinone oxidoreductase that uses light energy to abstract electrons from H(2)O, generating O(2) and a proton gradient subsequently used for ATP formation. It consists of a core antenna complex that captures photons, and an electron transfer chain that converts photonic excitation into a charge separation. The D1/D2 (PsbA/PsbD) reaction center heterodimer binds P680, the primary electron donor of PSII as well as several subsequent electron acceptors. D2 is needed for assembly of a stable PSII complex. The chain is Photosystem II D2 protein from Cyanidium caldarium (Red alga).